The primary structure comprises 283 residues: Pantothenate synthetase (283 aa).

30 to 37 (MGALHEGH) lines the ATP pocket. Catalysis depends on His37, which acts as the Proton donor. Residue Gln61 participates in (R)-pantoate binding. Gln61 is a binding site for beta-alanine. Position 147–150 (147–150 (GMKD)) interacts with ATP. Residue Gln153 coordinates (R)-pantoate. ATP is bound by residues Val176 and 184 to 187 (LSSR).

The protein belongs to the pantothenate synthetase family. Homodimer.

The protein resides in the cytoplasm. The enzyme catalyses (R)-pantoate + beta-alanine + ATP = (R)-pantothenate + AMP + diphosphate + H(+). It functions in the pathway cofactor biosynthesis; (R)-pantothenate biosynthesis; (R)-pantothenate from (R)-pantoate and beta-alanine: step 1/1. Its function is as follows. Catalyzes the condensation of pantoate with beta-alanine in an ATP-dependent reaction via a pantoyl-adenylate intermediate. This is Pantothenate synthetase from Endomicrobium trichonymphae.